We begin with the raw amino-acid sequence, 126 residues long: Small ribosomal subunit protein uS12 (126 aa).

Asp89 is modified (3-methylthioaspartic acid). The disordered stretch occupies residues 106–126 (GVRERRRSRSKYGAKMPRSAA).

It belongs to the universal ribosomal protein uS12 family. As to quaternary structure, part of the 30S ribosomal subunit. Contacts proteins S8 and S17. May interact with IF1 in the 30S initiation complex.

With S4 and S5 plays an important role in translational accuracy. Functionally, interacts with and stabilizes bases of the 16S rRNA that are involved in tRNA selection in the A site and with the mRNA backbone. Located at the interface of the 30S and 50S subunits, it traverses the body of the 30S subunit contacting proteins on the other side and probably holding the rRNA structure together. The combined cluster of proteins S8, S12 and S17 appears to hold together the shoulder and platform of the 30S subunit. The protein is Small ribosomal subunit protein uS12 of Tremblaya princeps.